A 212-amino-acid polypeptide reads, in one-letter code: Ribosomal RNA small subunit methyltransferase G (212 aa).

S-adenosyl-L-methionine-binding positions include G75, L80, 126–127 (AQ), and R141.

The protein belongs to the methyltransferase superfamily. RNA methyltransferase RsmG family.

The protein resides in the cytoplasm. Functionally, specifically methylates the N7 position of guanine in position 518 of 16S rRNA. The polypeptide is Ribosomal RNA small subunit methyltransferase G (Beutenbergia cavernae (strain ATCC BAA-8 / DSM 12333 / CCUG 43141 / JCM 11478 / NBRC 16432 / NCIMB 13614 / HKI 0122)).